The primary structure comprises 72 residues: Prokaryotic ubiquitin-like protein Pup (72 aa).

Residues 1–10 show a composition bias toward gly residues; sequence MATRDSGGGQ. A disordered region spans residues 1-41; the sequence is MATRDSGGGQQHTNRHADEVEEVAAEGNDASDLKERHEKLS. Positions 21–61 form a coiled coil; sequence EEVAAEGNDASDLKERHEKLSEDVDSLLDEIDDVLEENAEE. Residues 28–66 are ARC ATPase binding; sequence NDASDLKERHEKLSEDVDSLLDEIDDVLEENAEEFVKGY. Basic and acidic residues predominate over residues 31 to 41; sequence SDLKERHEKLS. An Isoglutamyl lysine isopeptide (Glu-Lys) (interchain with K-? in acceptor proteins) cross-link involves residue E72.

This sequence belongs to the prokaryotic ubiquitin-like protein family. As to quaternary structure, strongly interacts with the proteasome-associated ATPase ARC through a hydrophobic interface; the interacting region of Pup lies in its C-terminal half. There is one Pup binding site per ARC hexamer ring.

The protein operates within protein degradation; proteasomal Pup-dependent pathway. Protein modifier that is covalently attached to lysine residues of substrate proteins, thereby targeting them for proteasomal degradation. The tagging system is termed pupylation. In Frankia alni (strain DSM 45986 / CECT 9034 / ACN14a), this protein is Prokaryotic ubiquitin-like protein Pup.